A 152-amino-acid chain; its full sequence is Protein SprT-like (152 aa).

A SprT-like domain is found at 13-148 (NYVKKVSIED…FACGYCHGRL (136 aa)). His-72 contacts Zn(2+). Glu-73 is an active-site residue. His-76 provides a ligand contact to Zn(2+).

This sequence belongs to the SprT family. Zn(2+) serves as cofactor.

The protein resides in the cytoplasm. This Streptococcus agalactiae serotype III (strain NEM316) protein is Protein SprT-like.